A 188-amino-acid chain; its full sequence is dCTP deaminase (188 aa).

DCTP-binding positions include 111–116 (KSTYAR), 135–137 (TLE), Gln-156, Tyr-170, and Gln-180. Catalysis depends on Glu-137, which acts as the Proton donor/acceptor.

The protein belongs to the dCTP deaminase family. In terms of assembly, homotrimer.

It catalyses the reaction dCTP + H2O + H(+) = dUTP + NH4(+). The protein operates within pyrimidine metabolism; dUMP biosynthesis; dUMP from dCTP (dUTP route): step 1/2. Functionally, catalyzes the deamination of dCTP to dUTP. The protein is dCTP deaminase of Janthinobacterium sp. (strain Marseille) (Minibacterium massiliensis).